Here is a 488-residue protein sequence, read N- to C-terminus: MGFFSAIKRLWKGDTAPEDVSKPVEAEGSAIVGTSSTGSPVGTGAAMPAAQDAPSPAAPHAIATPDDAVPDDAVPDDAVHGGEAPWKTELTLALRQAEPRLSVWLGHVLDGVDEAGPILWERLRFFFSSLEVPADEAETFVRDFGRWLEAMEYRYVADFRSELQYRLALALDLEDEEDERSRLMLKLTEGLARTREQIGRRIDGLLASHGRIDEGFWEELEEILIMADVGFEPTTQLIGRLRERARKAGTDDPARFRELLREELEVIFRAPRRIAAVNPPEVVLLIGVNGVGKTTTIAKLAYRAQLQGRKVLIAAGDTFRAAAIEQLEIWAKRVGAGFYAKTAGADPAAVAYEAMDKAVSEGYDLLLVDTAGRLHTKANLMEELHKIRKVLGRKHPGAPHRSILVIDATTGQNALSQTKLFNEACGVDEIVLTKLDGTAKGGIVVAVAMQFGIPITYVGLGEKMEDMRPFNGSDFAMALLGVEEKPAA.

The interval 14-82 is disordered; the sequence is DTAPEDVSKP…AVPDDAVHGG (69 aa). The segment covering 32–67 has biased composition (low complexity); sequence VGTSSTGSPVGTGAAMPAAQDAPSPAAPHAIATPDD. Residues 287–294, 369–373, and 433–436 contribute to the GTP site; these read GVNGVGKT, DTAGR, and TKLD.

Belongs to the GTP-binding SRP family. FtsY subfamily. In terms of assembly, part of the signal recognition particle protein translocation system, which is composed of SRP and FtsY. SRP is a ribonucleoprotein composed of Ffh and a 4.5S RNA molecule.

It is found in the cell inner membrane. The protein localises to the cytoplasm. It catalyses the reaction GTP + H2O = GDP + phosphate + H(+). In terms of biological role, involved in targeting and insertion of nascent membrane proteins into the cytoplasmic membrane. Acts as a receptor for the complex formed by the signal recognition particle (SRP) and the ribosome-nascent chain (RNC). Interaction with SRP-RNC leads to the transfer of the RNC complex to the Sec translocase for insertion into the membrane, the hydrolysis of GTP by both Ffh and FtsY, and the dissociation of the SRP-FtsY complex into the individual components. This chain is Signal recognition particle receptor FtsY, found in Nitratidesulfovibrio vulgaris (strain ATCC 29579 / DSM 644 / CCUG 34227 / NCIMB 8303 / VKM B-1760 / Hildenborough) (Desulfovibrio vulgaris).